Here is a 229-residue protein sequence, read N- to C-terminus: High molecular weight rubredoxin (229 aa).

Residues 1-158 (MDTKALHTLT…YYHQVKRGTT (158 aa)) are flavodoxin-reductase-like. Residues 178-229 (SPKYQCTICNYVYDPVQGDPEHGIAPGTPFADLPEDWTCPICGAGKDAFEQI) enclose the Rubredoxin-like domain. Fe cation-binding residues include Cys183, Cys186, Cys216, and Cys219.

This sequence in the N-terminal section; belongs to the flavodoxin reductase family. Homodimer. It depends on Fe cation as a cofactor. FMN is required as a cofactor.

Its function is as follows. Has nitric oxide reductase activity in combination with FprA; probably involved in nitrosative stress protection. Acts as an NADH:FprA oxidoreductase. In Moorella thermoacetica (strain ATCC 39073 / JCM 9320), this protein is High molecular weight rubredoxin (hrb).